The sequence spans 417 residues: Spermidine/putrescine import ATP-binding protein PotA (417 aa).

An ABC transporter domain is found at 5 to 308 (IILKDLTKVF…PANRFVAQFV (304 aa)). Residue 37–44 (GPSGCGKT) coordinates ATP. The segment at 105-177 (DFNSKIKDNL…TALKCKKINK (73 aa)) is insert.

Belongs to the ABC transporter superfamily. Spermidine/putrescine importer (TC 3.A.1.11.1) family. In terms of assembly, the complex is composed of two ATP-binding proteins (PotA), two transmembrane proteins (PotB and PotC) and a solute-binding protein (PotD).

It localises to the cell membrane. It carries out the reaction ATP + H2O + polyamine-[polyamine-binding protein]Side 1 = ADP + phosphate + polyamineSide 2 + [polyamine-binding protein]Side 1.. Its function is as follows. Part of the ABC transporter complex PotABCD involved in spermidine/putrescine import. Responsible for energy coupling to the transport system. In Aster yellows witches'-broom phytoplasma (strain AYWB), this protein is Spermidine/putrescine import ATP-binding protein PotA.